The sequence spans 86 residues: Small ribosomal subunit protein bS20 (86 aa).

Residues methionine 1–methionine 27 are compositionally biased toward basic residues. Positions methionine 1–methionine 28 are disordered.

The protein belongs to the bacterial ribosomal protein bS20 family.

In terms of biological role, binds directly to 16S ribosomal RNA. This is Small ribosomal subunit protein bS20 from Aliivibrio salmonicida (strain LFI1238) (Vibrio salmonicida (strain LFI1238)).